The following is a 518-amino-acid chain: ESX-3 secretion system ATPase EccB3 (518 aa).

Residues 1 to 26 (MTGPVNPDDRRSFSSRTPVNENPDGV) form a disordered region. Residues 71–91 (VLTGALILVTGLVGCFIFSLF) form a helical membrane-spanning segment.

The protein belongs to the EccB family. Part of the ESX-3 / type VII secretion system (T7SS), which is composed of cytosolic and membrane components. The ESX-3 membrane complex is composed of EccB3, EccC3, EccD3 and EccE3.

Its subcellular location is the cell inner membrane. In terms of biological role, an ATPase. Part of the ESX-3 specialized secretion system, which is required for siderophore-mediated iron acquisition and for the secretion of EsxH and EsxG. The sequence is that of ESX-3 secretion system ATPase EccB3 from Mycolicibacterium smegmatis (strain ATCC 700084 / mc(2)155) (Mycobacterium smegmatis).